The sequence spans 461 residues: Trimethylamine monooxygenase (461 aa).

FAD is bound by residues serine 14, glutamate 39, lysine 40, glutamine 41, methionine 47, tryptophan 48, and histidine 64. Residues tryptophan 72 and asparagine 74 each contribute to the NADP(+) site. Asparagine 74 and alanine 127 together coordinate FAD. 5 residues coordinate NADP(+): serine 206, serine 207, serine 209, arginine 230, and threonine 231. FAD-binding residues include glutamine 319 and threonine 322. Arginine 413 contributes to the NADP(+) binding site.

Belongs to the FMO family. The cofactor is FAD.

The enzyme catalyses trimethylamine + NADPH + O2 = trimethylamine N-oxide + NADP(+) + H2O. Its function is as follows. Catalyzes the oxidation of trimethylamine (TMA) to produce trimethylamine N-oxide (TMAO). The produced TMAO is accumulated in the cell, functioning as a piezolyte, improving both growth and survival at high hydrostatic pressure (HHP). This Myroides profundi protein is Trimethylamine monooxygenase.